A 160-amino-acid chain; its full sequence is Protein TCP17 (160 aa).

The protein resides in the cytoplasm. In Trypanosoma cruzi, this protein is Protein TCP17.